The following is a 347-amino-acid chain: NADH-ubiquinone oxidoreductase chain 2 (347 aa).

Helical transmembrane passes span Ile13–Leu33, Ala55–Leu75, Leu96–Pro116, Val122–Met142, Thr151–Asn171, Ile178–Pro198, Asp199–Leu219, Leu237–Leu257, Gly274–Val294, and Leu326–Ile346.

This sequence belongs to the complex I subunit 2 family. As to quaternary structure, core subunit of respiratory chain NADH dehydrogenase (Complex I) which is composed of 45 different subunits. Interacts with TMEM242.

Its subcellular location is the mitochondrion inner membrane. It carries out the reaction a ubiquinone + NADH + 5 H(+)(in) = a ubiquinol + NAD(+) + 4 H(+)(out). Its function is as follows. Core subunit of the mitochondrial membrane respiratory chain NADH dehydrogenase (Complex I) which catalyzes electron transfer from NADH through the respiratory chain, using ubiquinone as an electron acceptor. Essential for the catalytic activity and assembly of complex I. The polypeptide is NADH-ubiquinone oxidoreductase chain 2 (Pongo abelii (Sumatran orangutan)).